A 306-amino-acid polypeptide reads, in one-letter code: MWKRWLALALVTIALVHGEEEQRSKSKICANVFCGAGRECAVTEKGEPTCLCIEQCKPHKRPVCGSNGKTYLNHCELHRDACLTGSKIQVDYDGHCKEKKSVSPSASPVVCYQANRDELRRRIIQWLEAEIIPDGWFSKGSNYSEILDKYFKSFDNGDSHLDSSEFLKFVEQNETAVNITAYPNQENNKLLRGLCVDALIELSDENADWKLSFQEFLKCLNPSFNPPEKKCALEDETYADGAETEVDCNRCVCSCGHWVCTAMTCDGKNQKGVQTHTEEEMTRYAQELQKHQGTAEKTKKVNTKEI.

An N-terminal signal peptide occupies residues 1–18 (MWKRWLALALVTIALVHG). The Follistatin-like domain maps to 28-51 (ICANVFCGAGRECAVTEKGEPTCL). 5 disulfides stabilise this stretch: C29/C40, C34/C50, C52/C82, C56/C75, and C64/C96. Residues 46–98 (GEPTCLCIEQCKPHKRPVCGSNGKTYLNHCELHRDACLTGSKIQVDYDGHCKE) form the Kazal-like domain. Residue N142 is glycosylated (N-linked (GlcNAc...) asparagine). The EF-hand 1 domain maps to 142-176 (NYSEILDKYFKSFDNGDSHLDSSEFLKFVEQNETA). S163 bears the Phosphoserine mark. N-linked (GlcNAc...) asparagine glycans are attached at residues N173 and N178. In terms of domain architecture, EF-hand 2 spans 191–226 (LRGLCVDALIELSDENADWKLSFQEFLKCLNPSFNP). The VWFC domain occupies 231 to 285 (CALEDETYADGAETEVDCNRCVCSCGHWVCTAMTCDGKNQKGVQTHTEEEMTRYA).

Homodimer. Interacts with SCN10A. Interacts with DIP2A; DIP2A may act as a cell surface receptor for FSTL1. Interacts with BMP4. Interacts with CD14; this interaction promotes TL4-mediated signaling cascade.

The protein resides in the secreted. Its function is as follows. Secreted glycoprotein that is involved in various physiological processes, such as angiogenesis, regulation of the immune response, cell proliferation and differentiation. Plays a role in the development of the central nervous system, skeletal system, lungs, and ureter. Promotes endothelial cell survival, migration and differentiation into network structures in an AKT-dependent manner. Also promotes survival of cardiac myocytes. Initiates various signaling cascades by activating different receptors on the cell surface such as DIP2A, TLR4 or BMP receptors. This Rattus norvegicus (Rat) protein is Follistatin-related protein 1 (Fstl1).